Reading from the N-terminus, the 129-residue chain is Phosphoribosyl-AMP cyclohydrolase (129 aa).

Mg(2+) is bound at residue Asp-76. Cys-77 serves as a coordination point for Zn(2+). 2 residues coordinate Mg(2+): Asp-78 and Asp-80. 2 residues coordinate Zn(2+): Cys-97 and Cys-104.

It belongs to the PRA-CH family. As to quaternary structure, homodimer. Mg(2+) is required as a cofactor. It depends on Zn(2+) as a cofactor.

It localises to the cytoplasm. It catalyses the reaction 1-(5-phospho-beta-D-ribosyl)-5'-AMP + H2O = 1-(5-phospho-beta-D-ribosyl)-5-[(5-phospho-beta-D-ribosylamino)methylideneamino]imidazole-4-carboxamide. It functions in the pathway amino-acid biosynthesis; L-histidine biosynthesis; L-histidine from 5-phospho-alpha-D-ribose 1-diphosphate: step 3/9. Functionally, catalyzes the hydrolysis of the adenine ring of phosphoribosyl-AMP. This chain is Phosphoribosyl-AMP cyclohydrolase, found in Polaromonas sp. (strain JS666 / ATCC BAA-500).